A 205-amino-acid polypeptide reads, in one-letter code: Snake venom metalloproteinase BmooMPalpha-I (205 aa).

In terms of domain architecture, Peptidase M12B spans 8 to 204 (RYIELVVVAD…HNPQCILNEP (197 aa)). The Ca(2+) site is built by Glu11 and Asp95. 3 cysteine pairs are disulfide-bonded: Cys119–Cys199, Cys159–Cys183, and Cys161–Cys166. A Zn(2+)-binding site is contributed by His144. Glu145 is a catalytic residue. The Zn(2+) site is built by His148 and His154. Ca(2+) contacts are provided by Cys199 and Asn202.

It belongs to the venom metalloproteinase (M12B) family. P-I subfamily. As to quaternary structure, monomer. Zn(2+) serves as cofactor. As to expression, expressed by the venom gland.

The protein resides in the secreted. Its activity is regulated as follows. Inhibited by EDTA. Not inhibited by the serine proteinase inhibitors aprotinin and benzamidine. Snake venom zinc metalloproteinase that cleaves the alpha chain of fibrinogen (FGA) first followed by the beta chain (FGB) and shows no effect on the gamma chain. Cleaves only the beta chain of fibrin, leaving the gamma-dimer untouched. Shows proteolytic activity towards azocasein. Causes defibrinogenation when intraperitoneally administered on mice. The protein is Snake venom metalloproteinase BmooMPalpha-I of Bothrops moojeni (Lance-headed viper).